The following is a 152-amino-acid chain: MKLILQEKVANLGNIGDQVVVKPGYARNFLLPLGKAVPATPEHIAEFEKRRAELEKAAAELLAKAKARAKKLEDKTFKITANASDEGRLFGSIGPREIAQAITEAGIEIEKREVDLSQGPIRQVGEYEVPLRLHTDVSVNVKIEVAPENSNS.

Belongs to the bacterial ribosomal protein bL9 family.

Its function is as follows. Binds to the 23S rRNA. This Coxiella burnetii (strain Dugway 5J108-111) protein is Large ribosomal subunit protein bL9.